A 2282-amino-acid chain; its full sequence is Ectopic P granules protein 5 homolog (2282 aa).

The protein belongs to the EPG5 family.

Functionally, involved in autophagy. This is Ectopic P granules protein 5 homolog from Aedes aegypti (Yellowfever mosquito).